The chain runs to 384 residues: MSFSNSKDKSVVAVYKLVKAPIYSHCFSQDKSILAVTCETDCLVYRVSNNTPPVLFATLKDHDKTITAVDISIHGRIVTCSQDRNAYVWEPLSDGTYKPTLVLLRINRAATSVTWAPNGYKFAVGSSARIIAVCYYEHENNWWVSKHIKKPIKSTINCLSWHANGVLLAAGGTDGFMRVFSGFIKGLDSKESVAGSPWGQKFPFGCLIREWYQGSYIHDVEWRSQMERIAYVAHDGTLNVVDYQSPVQSVNAPEGLPYRSLVWINDHEIVCGGYSCHPVLFSEASEGWKFAKNLDKSDNNKSSALTASGNTDELSGNNDESSTFGISALRKFKELDLKGKVSTDVQESAHENAIVELRPFAESNGQITQVSSCGLDGKIVIYTI.

WD repeat units follow at residues 61-99 (DHDK…TYKP), 105-146 (RINR…WVSK), 151-190 (PIKS…LDSK), 212-251 (YQGS…QSVN), and 349-383 (AHEN…VIYT).

It belongs to the WD repeat ARPC1 family. Component of the Arp2/3 complex composed of ARP2, ARP3, ARC40/p41-ARC, ARC35/p34-ARC, ARC18/p21-ARC, ARC19/p20-ARC and ARC16/p16-ARC.

The protein localises to the cytoplasm. The protein resides in the cytoskeleton. Its subcellular location is the actin patch. In terms of biological role, functions as a component of the Arp2/3 complex which is involved in regulation of actin polymerization and together with an activating nucleation-promoting factor (NPF) mediates the formation of branched actin networks. This is Actin-related protein 2/3 complex subunit 1 (ARC40) from Saccharomyces cerevisiae (strain ATCC 204508 / S288c) (Baker's yeast).